Reading from the N-terminus, the 634-residue chain is DNA-directed RNA polymerase subunit gamma (634 aa).

Zn(2+)-binding residues include cysteine 74, cysteine 76, cysteine 89, and cysteine 92. 3 residues coordinate Mg(2+): aspartate 471, aspartate 473, and aspartate 475.

Belongs to the RNA polymerase beta' chain family. RpoC1 subfamily. In terms of assembly, in cyanobacteria the RNAP catalytic core is composed of 2 alpha, 1 beta, 1 beta', 1 gamma and 1 omega subunit. When a sigma factor is associated with the core the holoenzyme is formed, which can initiate transcription. Requires Mg(2+) as cofactor. The cofactor is Zn(2+).

It catalyses the reaction RNA(n) + a ribonucleoside 5'-triphosphate = RNA(n+1) + diphosphate. DNA-dependent RNA polymerase catalyzes the transcription of DNA into RNA using the four ribonucleoside triphosphates as substrates. In Prochlorococcus marinus (strain SARG / CCMP1375 / SS120), this protein is DNA-directed RNA polymerase subunit gamma.